Reading from the N-terminus, the 449-residue chain is Glucose-6-phosphate isomerase (449 aa).

E291 functions as the Proton donor in the catalytic mechanism. Active-site residues include H312 and K426.

Belongs to the GPI family.

The protein resides in the cytoplasm. It carries out the reaction alpha-D-glucose 6-phosphate = beta-D-fructose 6-phosphate. The protein operates within carbohydrate biosynthesis; gluconeogenesis. Its pathway is carbohydrate degradation; glycolysis; D-glyceraldehyde 3-phosphate and glycerone phosphate from D-glucose: step 2/4. Its function is as follows. Catalyzes the reversible isomerization of glucose-6-phosphate to fructose-6-phosphate. The protein is Glucose-6-phosphate isomerase of Streptococcus pneumoniae serotype 19F (strain G54).